The primary structure comprises 472 residues: ATP synthase subunit beta (472 aa).

Position 160–167 (160–167 (GGAGVGKT)) interacts with ATP.

This sequence belongs to the ATPase alpha/beta chains family. As to quaternary structure, F-type ATPases have 2 components, CF(1) - the catalytic core - and CF(0) - the membrane proton channel. CF(1) has five subunits: alpha(3), beta(3), gamma(1), delta(1), epsilon(1). CF(0) has three main subunits: a(1), b(2) and c(9-12). The alpha and beta chains form an alternating ring which encloses part of the gamma chain. CF(1) is attached to CF(0) by a central stalk formed by the gamma and epsilon chains, while a peripheral stalk is formed by the delta and b chains.

It localises to the cell membrane. The enzyme catalyses ATP + H2O + 4 H(+)(in) = ADP + phosphate + 5 H(+)(out). Its function is as follows. Produces ATP from ADP in the presence of a proton gradient across the membrane. The catalytic sites are hosted primarily by the beta subunits. This Lachnoclostridium phytofermentans (strain ATCC 700394 / DSM 18823 / ISDg) (Clostridium phytofermentans) protein is ATP synthase subunit beta.